Here is a 389-residue protein sequence, read N- to C-terminus: Phosphatidylglycerol--prolipoprotein diacylglyceryl transferase (389 aa).

Helical transmembrane passes span 28–48 (IIVAIGIAFGILMFVLKLIYF), 58–78 (FFIFIAVLTMVLGARAWYFLI), 98–118 (LAIQGGVLLTTLAGIIYFNVF), and 148–168 (ISVFVMLDLIAPCVLIGQAIG). Arg169 serves as a coordination point for a 1,2-diacyl-sn-glycero-3-phospho-(1'-sn-glycerol). A run of 3 helical transmembrane segments spans residues 220 to 240 (IPLFLIESFFNTIFFVFIYFV), 281 to 301 (IVFSALLILVGIVGIIYCQTL), and 309 to 329 (FWTYFFLYGWYKVAAFFTTLF).

The protein belongs to the Lgt family.

The protein localises to the cell membrane. The catalysed reaction is L-cysteinyl-[prolipoprotein] + a 1,2-diacyl-sn-glycero-3-phospho-(1'-sn-glycerol) = an S-1,2-diacyl-sn-glyceryl-L-cysteinyl-[prolipoprotein] + sn-glycerol 1-phosphate + H(+). It functions in the pathway protein modification; lipoprotein biosynthesis (diacylglyceryl transfer). Catalyzes the transfer of the diacylglyceryl group from phosphatidylglycerol to the sulfhydryl group of the N-terminal cysteine of a prolipoprotein, the first step in the formation of mature lipoproteins. This chain is Phosphatidylglycerol--prolipoprotein diacylglyceryl transferase, found in Mycoplasma pneumoniae (strain ATCC 29342 / M129 / Subtype 1) (Mycoplasmoides pneumoniae).